The primary structure comprises 430 residues: tRNA(Ile)-lysidine synthase (430 aa).

27–32 is an ATP binding site; that stretch reads SGGSDS.

It belongs to the tRNA(Ile)-lysidine synthase family.

The protein resides in the cytoplasm. It catalyses the reaction cytidine(34) in tRNA(Ile2) + L-lysine + ATP = lysidine(34) in tRNA(Ile2) + AMP + diphosphate + H(+). Ligates lysine onto the cytidine present at position 34 of the AUA codon-specific tRNA(Ile) that contains the anticodon CAU, in an ATP-dependent manner. Cytidine is converted to lysidine, thus changing the amino acid specificity of the tRNA from methionine to isoleucine. The sequence is that of tRNA(Ile)-lysidine synthase from Rickettsia akari (strain Hartford).